The following is a 446-amino-acid chain: Probable beta-1,4-xylosyltransferase IRX9L (446 aa).

The segment at 1–26 (MSRRNAGAMQREGSVKDWEEFDPSPS) is disordered. Residues 1–85 (MSRRNAGAMQ…SRSKGMSLKR (85 aa)) are Cytoplasmic-facing. Residues 86–106 (AMLQLLVCFMVGIFIGFTPPF) traverse the membrane as a helical; Signal-anchor for type II membrane protein segment. Over 107 to 446 (SVDLPGKIAS…RNLDAVVPIT (340 aa)) the chain is Lumenal. N-linked (GlcNAc...) asparagine glycosylation is found at asparagine 185, asparagine 258, asparagine 361, and asparagine 411.

Belongs to the glycosyltransferase 43 family.

The protein resides in the golgi apparatus membrane. Probable beta-1,4-xylosyltransferase involved in xylan biosynthesis in cell walls. This Oryza sativa subsp. japonica (Rice) protein is Probable beta-1,4-xylosyltransferase IRX9L.